Consider the following 396-residue polypeptide: Deoxyguanosinetriphosphate triphosphohydrolase-like protein (396 aa).

In terms of domain architecture, HD spans 69-211; that stretch reads RLSHSLEVSQ…AALADDIAYN (143 aa).

It belongs to the dGTPase family. Type 2 subfamily.

This chain is Deoxyguanosinetriphosphate triphosphohydrolase-like protein, found in Parvibaculum lavamentivorans (strain DS-1 / DSM 13023 / NCIMB 13966).